The primary structure comprises 127 residues: Trefoil factor 2 (127 aa).

A signal peptide spans 1–21 (EPQRPAPGHPPPAGAVCLTGA). Residue glutamine 22 is modified to Pyrrolidone carboxylic acid. 2 P-type domains span residues 27-71 (CRCS…FKPL) and 77-120 (EECV…FFPM). Disulfide bonds link cysteine 27–cysteine 125, cysteine 29–cysteine 56, cysteine 40–cysteine 55, cysteine 50–cysteine 67, cysteine 79–cysteine 105, cysteine 89–cysteine 104, and cysteine 99–cysteine 116.

Found in pancreas.

It is found in the secreted. Inhibits gastrointestinal motility and gastric acid secretion. Could function as a structural component of gastric mucus, possibly by stabilizing glycoproteins in the mucus gel through interactions with carbohydrate side chains. The chain is Trefoil factor 2 (TFF2) from Sus scrofa (Pig).